A 422-amino-acid chain; its full sequence is uncharacterized protein (422 aa).

Belongs to the N(4)/N(6)-methyltransferase family.

It carries out the reaction a 2'-deoxyadenosine in DNA + S-adenosyl-L-methionine = an N(6)-methyl-2'-deoxyadenosine in DNA + S-adenosyl-L-homocysteine + H(+). This is an uncharacterized protein from Mycoplasma pneumoniae (strain ATCC 29342 / M129 / Subtype 1) (Mycoplasmoides pneumoniae).